Consider the following 38-residue polypeptide: Humanin-like protein (38 aa).

In the testis, expressed in Leydig cells at 10, 20 and 60 days of age (at protein level). Also expressed in pachytene spermatocytes at day 20 and in vessels, peritubular cells and spermatids at day 60. Not detected in Sertoli cells (at protein level). In the adult ovary, expressed in stromal cells, granulosa cells, theca cells and oocytes at diestrus and proestrus (at protein level). Expressed in the anterior pituitary where it is detected in lactotropes and somatotropes with lower levels in females than males (at protein level). In the hippocampus, expressed in astrocytes but not in neurons or oligodendrocytes (at protein level). Expressed in muscle, liver and hypothalamus but not in epididymal fat (at protein level). Widely expressed with highest levels in cardiac and skeletal muscle and lowest levels in lung, testis and uterus. In the CNS, levels are relatively high in the cerebellum and cortex and low in the hippocampus. In the hippocampus, lower levels are detected in ovariectomized animals than in controls.

The protein localises to the mitochondrion. It localises to the secreted. The protein resides in the cytoplasm. Functionally, plays a role as a neuroprotective factor. Protects against neuronal cell death induced by amyloid-beta peptides. Also protects against excitotoxic cell death. Prevents amyloid-beta peptide-induced spatial learning and memory impairments, protects against amyloid-beta peptide-induced suppression of hippocampal long-term potentiation, and inhibits amyloid-beta peptide-induced activation of STAT3 and inhibition of CASP3. Prevents glutamate-induced dendritic atrophy in hippocampal neurons and also prevents glutamate-induced decrease in SYP puncta number and total puncta area. Protects anterior pituitary cells from TNF-induced apoptosis. Plays a role in ovarian follicle development by acting as a cryoprotective factor for granulosa cells in the antral follicle. Increases androgen production in Leydig cells and promotes Leydig cell survival by preventing apoptosis. The chain is Humanin-like protein from Rattus norvegicus (Rat).